The chain runs to 126 residues: Acidic phospholipase A2 S1E6-a (126 aa).

Positions 1–3 are cleaved as a signal peptide; it reads VEG. Intrachain disulfides connect C29-C119, C31-C47, C46-C98, C52-C126, C53-C91, C60-C84, and C78-C89. Ca(2+) contacts are provided by Y30, G32, and G34. The active site involves H50. D51 is a binding site for Ca(2+). D92 is a catalytic residue.

Homodimer. The cofactor is Ca(2+). In terms of tissue distribution, expressed by the venom gland.

The protein resides in the secreted. It catalyses the reaction a 1,2-diacyl-sn-glycero-3-phosphocholine + H2O = a 1-acyl-sn-glycero-3-phosphocholine + a fatty acid + H(+). Snake venom phospholipase A2 (PLA2) that inhibits ADP-induced platelet aggregation. PLA2 catalyzes the calcium-dependent hydrolysis of the 2-acyl groups in 3-sn-phosphoglycerides. This Calloselasma rhodostoma (Malayan pit viper) protein is Acidic phospholipase A2 S1E6-a.